A 378-amino-acid chain; its full sequence is tRNA-specific 2-thiouridylase MnmA (378 aa).

Residues 9-16 (GVSGGVDS) and Met35 contribute to the ATP site. An interaction with target base in tRNA region spans residues 94–96 (NPD). Cys99 functions as the Nucleophile in the catalytic mechanism. Cys99 and Cys195 are oxidised to a cystine. ATP is bound at residue Gly123. The tract at residues 145–147 (KDQ) is interaction with tRNA. The Cysteine persulfide intermediate role is filled by Cys195. An interaction with tRNA region spans residues 307-308 (RY).

It belongs to the MnmA/TRMU family.

It localises to the cytoplasm. The catalysed reaction is S-sulfanyl-L-cysteinyl-[protein] + uridine(34) in tRNA + AH2 + ATP = 2-thiouridine(34) in tRNA + L-cysteinyl-[protein] + A + AMP + diphosphate + H(+). Its function is as follows. Catalyzes the 2-thiolation of uridine at the wobble position (U34) of tRNA, leading to the formation of s(2)U34. In Xanthomonas oryzae pv. oryzae (strain MAFF 311018), this protein is tRNA-specific 2-thiouridylase MnmA.